Consider the following 60-residue polypeptide: Large ribosomal subunit protein uL30 (60 aa).

The protein belongs to the universal ribosomal protein uL30 family. In terms of assembly, part of the 50S ribosomal subunit.

The protein is Large ribosomal subunit protein uL30 of Desulfotalea psychrophila (strain LSv54 / DSM 12343).